A 128-amino-acid polypeptide reads, in one-letter code: Ribonuclease pancreatic (128 aa).

Residues lysine 1 to serine 20 form a disordered region. Residues lysine 7 and arginine 10 each contribute to the substrate site. The active-site Proton acceptor is histidine 12. Disulfide bonds link cysteine 26/cysteine 84, cysteine 40/cysteine 95, cysteine 58/cysteine 110, and cysteine 65/cysteine 72. N-linked (GlcNAc...) asparagine glycosylation is present at asparagine 34. Substrate is bound by residues lysine 41 to threonine 45, lysine 66, and arginine 85. Catalysis depends on histidine 119, which acts as the Proton donor.

This sequence belongs to the pancreatic ribonuclease family. As to quaternary structure, monomer. Interacts with and forms tight 1:1 complexes with RNH1. Dimerization of two such complexes may occur. Interaction with RNH1 inhibits this protein. Pancreas.

The protein localises to the secreted. The enzyme catalyses an [RNA] containing cytidine + H2O = an [RNA]-3'-cytidine-3'-phosphate + a 5'-hydroxy-ribonucleotide-3'-[RNA].. It carries out the reaction an [RNA] containing uridine + H2O = an [RNA]-3'-uridine-3'-phosphate + a 5'-hydroxy-ribonucleotide-3'-[RNA].. Functionally, endonuclease that catalyzes the cleavage of RNA on the 3' side of pyrimidine nucleotides. Acts on single-stranded and double-stranded RNA. This is Ribonuclease pancreatic (RNASE1) from Choloepus hoffmanni (Hoffmann's two-fingered sloth).